Consider the following 926-residue polypeptide: Alpha-aminoadipic semialdehyde synthase, mitochondrial (926 aa).

Residues Met-1–Ala-27 constitute a mitochondrion transit peptide. Residues Val-28–Ser-476 are lysine-ketoglutarate reductase. An N6-acetyllysine mark is found at Lys-48 and Lys-56. Lys-93 is modified (N6-acetyllysine; alternate). Position 93 is an N6-succinyllysine; alternate (Lys-93). Lys-128 bears the N6-acetyllysine mark. N6-acetyllysine; alternate is present on Lys-138. Lys-138 carries the N6-succinyllysine; alternate modification. The residue at position 274 (Lys-274) is an N6-succinyllysine. Lys-286 is subject to N6-acetyllysine; alternate. The residue at position 286 (Lys-286) is an N6-succinyllysine; alternate. Position 333 is an N6-succinyllysine (Lys-333). Lys-458 is modified (N6-acetyllysine; alternate). Position 458 is an N6-succinyllysine; alternate (Lys-458). Residues Met-477–Pro-926 form a saccharopine dehydrogenase region. 3 residues coordinate NAD(+): Ser-488, Asp-512, and Gln-516. Lys-523 bears the N6-acetyllysine; alternate mark. Lys-523 is modified (N6-succinyllysine; alternate). Residue Ile-533 coordinates NAD(+). The residue at position 535 (Lys-535) is an N6-acetyllysine; alternate. Residue Lys-535 is modified to N6-succinyllysine; alternate. Residues Leu-554, Ala-576, and Ser-577 each contribute to the NAD(+) site. Ser-577–Tyr-578 contributes to the L-saccharopine binding site. N6-acetyllysine; alternate is present on Lys-584. Lys-584 carries the N6-succinyllysine; alternate modification. 3 residues coordinate NAD(+): Leu-603, Asp-604, and Pro-605. An L-saccharopine-binding site is contributed by Asp-604. Residue Arg-703 coordinates L-saccharopine. N6-acetyllysine is present on Lys-707. Thr-724–Arg-726 contacts L-saccharopine. Lys-732 carries the post-translational modification N6-succinyllysine. At Lys-739 the chain carries N6-acetyllysine. Position 761 is an N6-acetyllysine; alternate (Lys-761). Lys-761 carries the N6-succinyllysine; alternate modification. Lys-780 carries the N6-acetyllysine modification.

In the N-terminal section; belongs to the AlaDH/PNT family. It in the C-terminal section; belongs to the saccharopine dehydrogenase family. In terms of assembly, homotetramer. Expressed in all 16 tissues examined with highest expression in the liver.

The protein resides in the mitochondrion. It catalyses the reaction L-saccharopine + NADP(+) + H2O = L-lysine + 2-oxoglutarate + NADPH + H(+). It carries out the reaction L-saccharopine + NAD(+) + H2O = (S)-2-amino-6-oxohexanoate + L-glutamate + NADH + H(+). It functions in the pathway amino-acid degradation; L-lysine degradation via saccharopine pathway; glutaryl-CoA from L-lysine: step 1/6. The protein operates within amino-acid degradation; L-lysine degradation via saccharopine pathway; glutaryl-CoA from L-lysine: step 2/6. In terms of biological role, bifunctional enzyme that catalyzes the first two steps in lysine degradation. The polypeptide is Alpha-aminoadipic semialdehyde synthase, mitochondrial (Homo sapiens (Human)).